The sequence spans 105 residues: Small ribosomal subunit protein uS10 (105 aa).

Belongs to the universal ribosomal protein uS10 family. Part of the 30S ribosomal subunit.

Its function is as follows. Involved in the binding of tRNA to the ribosomes. The sequence is that of Small ribosomal subunit protein uS10 from Rickettsia rickettsii (strain Iowa).